The chain runs to 104 residues: MNTLQRLEATIAARRNADPDSSYVARLNAKGLPKMAEKVGEEATETVIAALTGSDEELVGEGADLIFHLLVLLQARGVSLDQVLAELDRREGLSGLDEKAKRGD.

The protein belongs to the PRA-PH family.

It is found in the cytoplasm. It catalyses the reaction 1-(5-phospho-beta-D-ribosyl)-ATP + H2O = 1-(5-phospho-beta-D-ribosyl)-5'-AMP + diphosphate + H(+). Its pathway is amino-acid biosynthesis; L-histidine biosynthesis; L-histidine from 5-phospho-alpha-D-ribose 1-diphosphate: step 2/9. The chain is Phosphoribosyl-ATP pyrophosphatase from Erythrobacter litoralis (strain HTCC2594).